The sequence spans 409 residues: Glucose-1-phosphate adenylyltransferase (409 aa).

Alpha-D-glucose 1-phosphate-binding positions include G168, 183–184, and S201; that span reads EK.

It belongs to the bacterial/plant glucose-1-phosphate adenylyltransferase family. In terms of assembly, homotetramer.

The enzyme catalyses alpha-D-glucose 1-phosphate + ATP + H(+) = ADP-alpha-D-glucose + diphosphate. The protein operates within glycan biosynthesis; glycogen biosynthesis. Functionally, involved in the biosynthesis of ADP-glucose, a building block required for the elongation reactions to produce glycogen. Catalyzes the reaction between ATP and alpha-D-glucose 1-phosphate (G1P) to produce pyrophosphate and ADP-Glc. The protein is Glucose-1-phosphate adenylyltransferase of Corynebacterium efficiens (strain DSM 44549 / YS-314 / AJ 12310 / JCM 11189 / NBRC 100395).